A 159-amino-acid chain; its full sequence is Bacterioferritin (159 aa).

Residues 1–145 enclose the Ferritin-like diiron domain; that stretch reads MQGDPDVLRL…TQLELMDKLG (145 aa). Fe cation-binding residues include Glu-18 and Glu-51. Met-52 is a binding site for heme b. Fe cation contacts are provided by His-54, Glu-94, Glu-127, and His-130.

The protein belongs to the bacterioferritin family. In terms of assembly, homooligomer of 24 subunits, arranged as 12 dimers, that are packed together to form an approximately spherical molecule with a central cavity, in which large amounts of iron can be deposited. It depends on heme b as a cofactor.

It catalyses the reaction 4 Fe(2+) + O2 + 4 H(+) = 4 Fe(3+) + 2 H2O. It carries out the reaction Fe(2+)(in) = Fe(2+)(out). In terms of biological role, iron-storage protein, whose ferroxidase center binds Fe(2+), oxidizes it using dioxygen to Fe(3+), and participates in the subsequent Fe(3+) oxide mineral core formation within the central cavity of the BFR protein shell. This chain is Bacterioferritin (bfr), found in Mycobacterium bovis (strain ATCC BAA-935 / AF2122/97).